Reading from the N-terminus, the 273-residue chain is Large ribosomal subunit protein uL2 (273 aa).

The segment at 221–273 is disordered; that stretch reads RGTAMNPVDHPHGGGEGRNFGKHPVTPWGVQTKGKKTRHNKRTDKFIVRRRGK. Residues 253–273 are compositionally biased toward basic residues; the sequence is KGKKTRHNKRTDKFIVRRRGK.

The protein belongs to the universal ribosomal protein uL2 family. As to quaternary structure, part of the 50S ribosomal subunit. Forms a bridge to the 30S subunit in the 70S ribosome.

Functionally, one of the primary rRNA binding proteins. Required for association of the 30S and 50S subunits to form the 70S ribosome, for tRNA binding and peptide bond formation. It has been suggested to have peptidyltransferase activity; this is somewhat controversial. Makes several contacts with the 16S rRNA in the 70S ribosome. The sequence is that of Large ribosomal subunit protein uL2 from Glaesserella parasuis serovar 5 (strain SH0165) (Haemophilus parasuis).